We begin with the raw amino-acid sequence, 293 residues long: 4-hydroxybenzoate octaprenyltransferase (293 aa).

A run of 8 helical transmembrane segments spans residues 26 to 48, 98 to 118, 122 to 142, 145 to 165, 167 to 187, 218 to 238, 241 to 261, and 272 to 292; these read PIGT…GGMP, TEAK…DLLL, TFLL…MKRF, LPQV…YGAV, ESLP…TVAY, IIAL…WISQ, WGYF…CWLT, and AFLN…VGIY.

The protein belongs to the UbiA prenyltransferase family. Requires Mg(2+) as cofactor.

It localises to the cell inner membrane. The enzyme catalyses all-trans-octaprenyl diphosphate + 4-hydroxybenzoate = 4-hydroxy-3-(all-trans-octaprenyl)benzoate + diphosphate. The protein operates within cofactor biosynthesis; ubiquinone biosynthesis. Its function is as follows. Catalyzes the prenylation of para-hydroxybenzoate (PHB) with an all-trans polyprenyl group. Mediates the second step in the final reaction sequence of ubiquinone-8 (UQ-8) biosynthesis, which is the condensation of the polyisoprenoid side chain with PHB, generating the first membrane-bound Q intermediate 3-octaprenyl-4-hydroxybenzoate. The polypeptide is 4-hydroxybenzoate octaprenyltransferase (Actinobacillus pleuropneumoniae serotype 3 (strain JL03)).